The sequence spans 286 residues: MASAKEIKTKIASVKNTQKITSAMEMVAASKMRRAQERMAASRPYAENMRKVIGHVAQGTLEYKHPYLEVRDAKRVGYIVVATDRGLCGGLNVNLFKKVVSDVKKWKEQGADVEFCPIGARSVQFFKSFGGEVSAHASGLGDAPKLADLIGTVRVMLKAYNEGKLDRLYIVFNKFVNTMTQTPVIEQLLPLPKSDEEVASYPWDYIYEPDPKEVLDLLLTRYVESQVYQGVVENIASEQAARMVAMKAATDNAGEMIDDLQLVYNKARQAAITQELSEIVSGAAAV.

This sequence belongs to the ATPase gamma chain family. As to quaternary structure, F-type ATPases have 2 components, CF(1) - the catalytic core - and CF(0) - the membrane proton channel. CF(1) has five subunits: alpha(3), beta(3), gamma(1), delta(1), epsilon(1). CF(0) has three main subunits: a, b and c.

The protein resides in the cell inner membrane. In terms of biological role, produces ATP from ADP in the presence of a proton gradient across the membrane. The gamma chain is believed to be important in regulating ATPase activity and the flow of protons through the CF(0) complex. The polypeptide is ATP synthase gamma chain (Shewanella frigidimarina (strain NCIMB 400)).